A 286-amino-acid polypeptide reads, in one-letter code: Interferon-induced 35 kDa protein (286 aa).

Residues 5 to 26 (LDAALHALQEEQARLKMRLWDL) form a leucine-zipper region. NID domains are found at residues 81-170 (ALIT…GDVD) and 183-266 (FARD…GEVE).

This sequence belongs to the NMI family. Homodimer. Also interacts with BATF. Interacts with TRIM21. Interacts with NMI; the interaction is direct and is facilitated by TRIM21. In terms of processing, phosphorylated. Dephosphorylation correlates with the formation of a complex with NMI. As to expression, expressed in a wide range of cell types, including fibroblasts, macrophages, and epithelial cells.

The protein resides in the cytoplasm. The protein localises to the nucleus. It localises to the secreted. Functionally, acts as a signaling pathway regulator involved in innate immune system response. In response to interferon IFN-alpha, associates in a complex with signaling pathway regulator NMI to regulate immune response; the complex formation prevents proteasome-mediated degradation of IFI35 and correlates with IFI35 dephosphorylation. In complex with NMI, inhibits virus-triggered type I interferon/IFN-beta production. In complex with NMI, negatively regulates nuclear factor NF-kappa-B signaling by inhibiting the nuclear translocation, activation and transcription of the NF-kappa-B subunit p65/RELA, resulting in the inhibition of endothelial cell proliferation, migration and re-endothelialization of injured arteries. Beside its role as an intracellular signaling pathway regulator, also functions extracellularly as damage-associated molecular patterns (DAMPs) to promote inflammation when actively released by macrophage to the extracellular space during cell injury and pathogen invasion. Macrophage-secreted IFI35 activates NF-kappa-B signaling in adjacent macrophages through Toll-like receptor 4/TLR4 activation, thereby inducing NF-kappa-B translocation from the cytoplasm into the nucleus which promotes the release of pro-inflammatory cytokines. This chain is Interferon-induced 35 kDa protein, found in Homo sapiens (Human).